Reading from the N-terminus, the 200-residue chain is Lipopolysaccharide core heptose(II)-phosphate phosphatase (200 aa).

A signal peptide spans 1 to 25 (MLAFCRSSLKSKKYFIILLALAAIA).

This sequence belongs to the phosphoglycerate mutase family. Ais subfamily.

The protein resides in the periplasm. Its pathway is bacterial outer membrane biogenesis; lipopolysaccharide metabolism. Catalyzes the dephosphorylation of heptose(II) of the outer membrane lipopolysaccharide core. The sequence is that of Lipopolysaccharide core heptose(II)-phosphate phosphatase from Escherichia coli O17:K52:H18 (strain UMN026 / ExPEC).